The chain runs to 124 residues: Small ribosomal subunit protein uS12 (124 aa).

D89 is modified (3-methylthioaspartic acid). Residues 105-124 (AGVKDRRQSRSKYGAKRPKA) form a disordered region. The segment covering 113–124 (SRSKYGAKRPKA) has biased composition (basic residues).

This sequence belongs to the universal ribosomal protein uS12 family. As to quaternary structure, part of the 30S ribosomal subunit. Contacts proteins S8 and S17. May interact with IF1 in the 30S initiation complex.

Functionally, with S4 and S5 plays an important role in translational accuracy. Interacts with and stabilizes bases of the 16S rRNA that are involved in tRNA selection in the A site and with the mRNA backbone. Located at the interface of the 30S and 50S subunits, it traverses the body of the 30S subunit contacting proteins on the other side and probably holding the rRNA structure together. The combined cluster of proteins S8, S12 and S17 appears to hold together the shoulder and platform of the 30S subunit. The sequence is that of Small ribosomal subunit protein uS12 (rpsL) from Synechococcus elongatus (strain ATCC 33912 / PCC 7942 / FACHB-805) (Anacystis nidulans R2).